The following is a 197-amino-acid chain: Large ribosomal subunit protein bL25 (197 aa).

It belongs to the bacterial ribosomal protein bL25 family. CTC subfamily. Part of the 50S ribosomal subunit; part of the 5S rRNA/L5/L18/L25 subcomplex. Contacts the 5S rRNA. Binds to the 5S rRNA independently of L5 and L18.

Its function is as follows. This is one of the proteins that binds to the 5S RNA in the ribosome where it forms part of the central protuberance. The sequence is that of Large ribosomal subunit protein bL25 from Lawsonia intracellularis (strain PHE/MN1-00).